Reading from the N-terminus, the 345-residue chain is Phosphoribosylformylglycinamidine cyclo-ligase (345 aa).

The protein belongs to the AIR synthase family.

It is found in the cytoplasm. The enzyme catalyses 2-formamido-N(1)-(5-O-phospho-beta-D-ribosyl)acetamidine + ATP = 5-amino-1-(5-phospho-beta-D-ribosyl)imidazole + ADP + phosphate + H(+). It functions in the pathway purine metabolism; IMP biosynthesis via de novo pathway; 5-amino-1-(5-phospho-D-ribosyl)imidazole from N(2)-formyl-N(1)-(5-phospho-D-ribosyl)glycinamide: step 2/2. This Limosilactobacillus reuteri (strain DSM 20016) (Lactobacillus reuteri) protein is Phosphoribosylformylglycinamidine cyclo-ligase.